A 1425-amino-acid chain; its full sequence is B-cell CLL/lymphoma 9 protein (1425 aa).

The disordered stretch occupies residues Met1–Thr172. 2 stretches are compositionally biased toward polar residues: residues Lys7–Lys21 and Met34–Asn48. Residues Gly54 to Pro63 are compositionally biased toward low complexity. Positions Gly78–Lys94 are enriched in gly residues. 2 stretches are compositionally biased toward basic and acidic residues: residues Glu100–Asp112 and Ser120–Glu135. Residue Ser104 is modified to Phosphoserine. A compositionally biased stretch (low complexity) spans Thr144–Ser157. Phosphoserine is present on Ser157. At Thr172 the chain carries Phosphothreonine. Positions Val177–Ile205 are interaction with PYGO1. Residues Asn207–Thr226 show a composition bias toward polar residues. 2 disordered regions span residues Asn207–Ser441 and Val577–Gln624. Composition is skewed to pro residues over residues Lys232–Pro241 and Pro256–Ala270. Residues Gly304–Gly320 show a composition bias toward polar residues. Thr315 is subject to Phosphothreonine. 2 positions are modified to phosphoserine: Ser318 and Ser352. Over residues Gln355–Phe380 the composition is skewed to basic and acidic residues. The interaction with CTNNB1 stretch occupies residues His358–Phe374. Residues Ser686 and Ser688 each carry the phosphoserine modification. 4 disordered regions span residues Arg781–Asn1003, Val1031–Ser1051, Pro1153–Ala1199, and Pro1252–Met1275. At Arg800 the chain carries Asymmetric dimethylarginine. Over residues Asn822 to Pro835 the composition is skewed to low complexity. Lys843 is subject to N6-acetyllysine. The segment covering Thr866 to Gln890 has biased composition (polar residues). A compositionally biased stretch (low complexity) spans Leu891–Ala902. Phosphoserine is present on residues Ser906 and Ser916. Positions Pro936–Pro946 are enriched in pro residues. Gly residues predominate over residues Pro1157 to Pro1175.

Belongs to the BCL9 family. In terms of assembly, binds to beta-catenin (CTNNB1), PYGO1 and PYGO2; the interaction with PYGO1 increases PYGO1 affinity to histone H3 methylated at 'Lys 4'.

The protein resides in the nucleus. Promotes beta-catenin's transcriptional activity. Involved in signal transduction through the Wnt pathway. The chain is B-cell CLL/lymphoma 9 protein (Bcl9) from Mus musculus (Mouse).